A 689-amino-acid polypeptide reads, in one-letter code: Glycine--tRNA ligase beta subunit (689 aa).

It belongs to the class-II aminoacyl-tRNA synthetase family. Tetramer of two alpha and two beta subunits.

The protein localises to the cytoplasm. It carries out the reaction tRNA(Gly) + glycine + ATP = glycyl-tRNA(Gly) + AMP + diphosphate. The chain is Glycine--tRNA ligase beta subunit from Shewanella piezotolerans (strain WP3 / JCM 13877).